The sequence spans 1399 residues: DNA-directed RNA polymerase subunit beta' (1399 aa).

Zn(2+) is bound by residues cysteine 70, cysteine 72, cysteine 85, and cysteine 88. Aspartate 460, aspartate 462, and aspartate 464 together coordinate Mg(2+). Residues cysteine 814, cysteine 888, cysteine 895, and cysteine 898 each contribute to the Zn(2+) site.

The protein belongs to the RNA polymerase beta' chain family. In terms of assembly, the RNAP catalytic core consists of 2 alpha, 1 beta, 1 beta' and 1 omega subunit. When a sigma factor is associated with the core the holoenzyme is formed, which can initiate transcription. Requires Mg(2+) as cofactor. The cofactor is Zn(2+).

The enzyme catalyses RNA(n) + a ribonucleoside 5'-triphosphate = RNA(n+1) + diphosphate. Functionally, DNA-dependent RNA polymerase catalyzes the transcription of DNA into RNA using the four ribonucleoside triphosphates as substrates. The chain is DNA-directed RNA polymerase subunit beta' from Pseudomonas fluorescens (strain Pf0-1).